The sequence spans 304 residues: Dihydroorotate dehydrogenase B (NAD(+)), catalytic subunit (304 aa).

FMN is bound by residues Ser20 and 44-45 (KA). Substrate is bound by residues Lys44 and 68–72 (NAIGL). Positions 98 and 126 each coordinate FMN. A substrate-binding site is contributed by Asn126. Cys129 acts as the Nucleophile in catalysis. Residues Lys164 and Ile190 each contribute to the FMN site. 191 to 192 (NT) contributes to the substrate binding site. Residues Gly216, 242–243 (GG), and 264–265 (GT) each bind FMN.

This sequence belongs to the dihydroorotate dehydrogenase family. Type 1 subfamily. As to quaternary structure, heterotetramer of 2 PyrK and 2 PyrD type B subunits. It depends on FMN as a cofactor.

Its subcellular location is the cytoplasm. It catalyses the reaction (S)-dihydroorotate + NAD(+) = orotate + NADH + H(+). Its pathway is pyrimidine metabolism; UMP biosynthesis via de novo pathway; orotate from (S)-dihydroorotate (NAD(+) route): step 1/1. Catalyzes the conversion of dihydroorotate to orotate with NAD(+) as electron acceptor. In Oceanobacillus iheyensis (strain DSM 14371 / CIP 107618 / JCM 11309 / KCTC 3954 / HTE831), this protein is Dihydroorotate dehydrogenase B (NAD(+)), catalytic subunit (pyrD).